The following is an 81-amino-acid chain: Cytotoxin 1c (81 aa).

Positions 1 to 21 (MKTLLLTLVVVTIVCLDLGYT) are cleaved as a signal peptide. Disulfide bonds link C24–C42, C35–C59, C63–C74, and C75–C80.

Belongs to the three-finger toxin family. Short-chain subfamily. Type IA cytotoxin sub-subfamily. Monomer in solution; Homodimer and oligomer in the presence of negatively charged lipids forming a pore with a size ranging between 20 and 30 Angstroms. In terms of tissue distribution, expressed by the venom gland.

It is found in the secreted. Its subcellular location is the target cell membrane. Shows cytolytic activity on many different cells by forming pore in lipid membranes. In vivo, increases heart rate or kills the animal by cardiac arrest. In addition, it binds to heparin with high affinity, interacts with Kv channel-interacting protein 1 (KCNIP1) in a calcium-independent manner, and binds to integrin alpha-V/beta-3 (ITGAV/ITGB3) with moderate affinity. The protein is Cytotoxin 1c of Naja atra (Chinese cobra).